The sequence spans 424 residues: Gamma-glutamyl phosphate reductase (424 aa).

This sequence belongs to the gamma-glutamyl phosphate reductase family.

It is found in the cytoplasm. It catalyses the reaction L-glutamate 5-semialdehyde + phosphate + NADP(+) = L-glutamyl 5-phosphate + NADPH + H(+). The protein operates within amino-acid biosynthesis; L-proline biosynthesis; L-glutamate 5-semialdehyde from L-glutamate: step 2/2. Catalyzes the NADPH-dependent reduction of L-glutamate 5-phosphate into L-glutamate 5-semialdehyde and phosphate. The product spontaneously undergoes cyclization to form 1-pyrroline-5-carboxylate. The polypeptide is Gamma-glutamyl phosphate reductase (Dehalococcoides mccartyi (strain CBDB1)).